A 98-amino-acid chain; its full sequence is NADH-ubiquinone oxidoreductase chain 4L (98 aa).

A run of 3 helical transmembrane segments spans residues 1 to 21, 29 to 49, and 61 to 81; these read MPVV…GLLI, SLLC…VTVL, and IILL…LVMV.

Belongs to the complex I subunit 4L family. As to quaternary structure, core subunit of respiratory chain NADH dehydrogenase (Complex I) which is composed of 45 different subunits.

The protein localises to the mitochondrion inner membrane. The enzyme catalyses a ubiquinone + NADH + 5 H(+)(in) = a ubiquinol + NAD(+) + 4 H(+)(out). Core subunit of the mitochondrial membrane respiratory chain NADH dehydrogenase (Complex I) which catalyzes electron transfer from NADH through the respiratory chain, using ubiquinone as an electron acceptor. Part of the enzyme membrane arm which is embedded in the lipid bilayer and involved in proton translocation. This Helarctos malayanus (Malayan sun bear) protein is NADH-ubiquinone oxidoreductase chain 4L (MT-ND4L).